The following is a 251-amino-acid chain: Aspartate/glutamate leucyltransferase (251 aa).

The protein belongs to the R-transferase family. Bpt subfamily.

It localises to the cytoplasm. The enzyme catalyses N-terminal L-glutamyl-[protein] + L-leucyl-tRNA(Leu) = N-terminal L-leucyl-L-glutamyl-[protein] + tRNA(Leu) + H(+). It catalyses the reaction N-terminal L-aspartyl-[protein] + L-leucyl-tRNA(Leu) = N-terminal L-leucyl-L-aspartyl-[protein] + tRNA(Leu) + H(+). Functions in the N-end rule pathway of protein degradation where it conjugates Leu from its aminoacyl-tRNA to the N-termini of proteins containing an N-terminal aspartate or glutamate. This Xanthomonas axonopodis pv. citri (strain 306) protein is Aspartate/glutamate leucyltransferase.